The primary structure comprises 3131 residues: Intermembrane lipid transfer protein vps1302 (3131 aa).

A Chorein N-terminal domain is found at 2 to 115; that stretch reads LEGLLANFLN…VLESKRRQMQ (114 aa). Basic and acidic residues predominate over residues 774 to 801; that stretch reads DGKASDDDDNGDWRPESSESLDSHESEY. The interval 774–807 is disordered; it reads DGKASDDDDNGDWRPESSESLDSHESEYKLNNTP. Residues 2085–2363 form the SHR-BD domain; sequence KVMIYPPYVI…NYSWDFPILK (279 aa).

Belongs to the VPS13 family.

Its subcellular location is the golgi apparatus. The protein resides in the trans-Golgi network. In terms of biological role, mediates the transfer of lipids between membranes at organelle contact sites. May play a role in mitochondrial lipid homeostasis, Golgi vesicle transport, reticulophagy, actin cytoskeleton organization and formation of the forespore membrane. The polypeptide is Intermembrane lipid transfer protein vps1302 (Schizosaccharomyces pombe (strain 972 / ATCC 24843) (Fission yeast)).